The sequence spans 355 residues: Alkanal monooxygenase alpha chain (355 aa).

The protein belongs to the bacterial luciferase oxidoreductase family. In terms of assembly, heterodimer of an alpha and a beta chain.

The catalysed reaction is a long-chain fatty aldehyde + FMNH2 + O2 = a long-chain fatty acid + hnu + FMN + H2O + 2 H(+). In terms of biological role, light-emitting reaction in luminous bacteria. The sequence is that of Alkanal monooxygenase alpha chain (luxA) from Vibrio harveyi (Beneckea harveyi).